Consider the following 31-residue polypeptide: Toxin BmKK12 (31 aa).

The residue at position 1 (Gln1) is a Pyrrolidone carboxylic acid. 3 disulfides stabilise this stretch: Cys4-Cys20, Cys10-Cys25, and Cys14-Cys27. A Proline amide modification is found at Pro31.

This sequence belongs to the short scorpion toxin superfamily. Potassium channel inhibitor family. Alpha-KTx 17 subfamily. The N-terminus is blocked. Expressed by the venom gland.

It localises to the secreted. Its function is as follows. Blocker of potassium channels (Kv). This chain is Toxin BmKK12, found in Olivierus martensii (Manchurian scorpion).